The chain runs to 293 residues: uncharacterized protein (293 aa).

2 disordered regions span residues 1 to 95 and 268 to 293; these read MFLR…KDKA and EETA…GRAL. Phosphoserine occurs at positions 34, 35, and 89. Composition is skewed to basic and acidic residues over residues 85–95 and 277–286; these read KRMDSLKKDKA and GQGKEAKEQT.

This is an uncharacterized protein from Rattus norvegicus (Rat).